The primary structure comprises 489 residues: Protein LMBR1L (489 aa).

Over 1–21 the chain is Extracellular; sequence MEAPDYEVLSVREQLFHERIR. Residues 1–59 are interaction with LGB; the sequence is MEAPDYEVLSVREQLFHERIRECIISTLLFATLYILCHIFLTRFKKPAEFTTVDDEDAT. Residues 1–76 are LCN1-binding; the sequence is MEAPDYEVLS…LCTFTLAIAL (76 aa). Residues 22–42 form a helical membrane-spanning segment; that stretch reads ECIISTLLFATLYILCHIFLT. The Cytoplasmic portion of the chain corresponds to 43 to 66; that stretch reads RFKKPAEFTTVDDEDATVNKIALE. The chain crosses the membrane as a helical span at residues 67 to 87; it reads LCTFTLAIALGAVLLLPFSII. The Extracellular segment spans residues 88 to 114; the sequence is SNEVLLSLPRNYYIQWLNGSLIHGLWN. Residues 115 to 135 traverse the membrane as a helical segment; that stretch reads LVFLFSNLSLIFLMPFAYFFT. Topologically, residues 136–154 are cytoplasmic; sequence ESEGFAGSRKGVLGRVYET. The chain crosses the membrane as a helical span at residues 155 to 175; sequence VVMLMLLTLLVLGMVWVASAI. Residues 176 to 196 lie on the Extracellular side of the membrane; it reads VDKNKANRESLYDFWEYYLPY. A helical membrane pass occupies residues 197–217; the sequence is LYSCISFLGVLLLLVCTPLGL. Residues 218–305 lie on the Cytoplasmic side of the membrane; that stretch reads ARMFSVTGKL…NLGYPLAMLC (88 aa). The helical transmembrane segment at 306–326 threads the bilayer; sequence LLVLTGLSVLIVAIHILELLI. Topologically, residues 327–350 are extracellular; sequence DEAAMPRGMQGTSLGQVSFSKLGS. The helical transmembrane segment at 351–371 threads the bilayer; it reads FGAVIQVVLIFYLMVSSVVGF. Residues 372–388 lie on the Cytoplasmic side of the membrane; sequence YSSPLFRSLRPRWHDTA. The chain crosses the membrane as a helical span at residues 389–409; sequence MTQIIGNCVCLLVLSSALPVF. Over 410-431 the chain is Extracellular; that stretch reads SRTLGLTRFDLLGDFGRFNWLG. The chain crosses the membrane as a helical span at residues 432–452; sequence NFYIVFLYNAAFAGLTTLCLV. The Cytoplasmic segment spans residues 453–489; the sequence is KTFTAAVRAELIRAFGLDRLPLPVSGFPQASRKTQHQ.

The protein belongs to the LIMR family. As to quaternary structure, dimer. Can also form higher oligomers. Interacts with LCN1; this interaction mediates the endocytosis of LCN1. Interacts with UBAC2, FAF2, VCP, AMFR, ZNRF3, CTNNB1, LRP6, GSK3A and GSK3B. Interacts with DVL2 and RNF43. Interaction with SCGB1A1 has been observed in PubMed:16423471, but not in PubMed:23964685. Interaction with LGB which mediates the endocytosis of LGB has been observed in PubMed:17991420, but not in PubMed:23964685. In terms of tissue distribution, expressed in testis, pituitary gland, adrenal gland, trachea, placenta, thymus, cerebellum, stomach, mammary gland, spinal cord. A weaker expression is detected in colon, pancreas, and prostate.

The protein localises to the cell membrane. Its subcellular location is the endoplasmic reticulum membrane. Functionally, plays an essential role in lymphocyte development by negatively regulating the canonical Wnt signaling pathway. In association with UBAC2 and E3 ubiquitin-protein ligase AMFR, promotes the ubiquitin-mediated degradation of CTNNB1 and Wnt receptors FZD6 and LRP6. LMBR1L stabilizes the beta-catenin destruction complex that is required for regulating CTNNB1 levels. Acts as a LCN1 receptor and can mediate its endocytosis. The sequence is that of Protein LMBR1L (LMBR1L) from Homo sapiens (Human).